The following is an 85-amino-acid chain: Small ribosomal subunit protein uS17 (85 aa).

This sequence belongs to the universal ribosomal protein uS17 family. Part of the 30S ribosomal subunit.

In terms of biological role, one of the primary rRNA binding proteins, it binds specifically to the 5'-end of 16S ribosomal RNA. The polypeptide is Small ribosomal subunit protein uS17 (Syntrophus aciditrophicus (strain SB)).